The sequence spans 148 residues: Macrodomain Ter protein (148 aa).

The protein belongs to the MatP family. Homodimer.

The protein resides in the cytoplasm. Functionally, required for spatial organization of the terminus region of the chromosome (Ter macrodomain) during the cell cycle. Prevents early segregation of duplicated Ter macrodomains during cell division. Binds specifically to matS, which is a 13 bp signature motif repeated within the Ter macrodomain. This Photobacterium profundum (strain SS9) protein is Macrodomain Ter protein.